Here is a 230-residue protein sequence, read N- to C-terminus: Sugar fermentation stimulation protein homolog (230 aa).

This sequence belongs to the SfsA family.

The chain is Sugar fermentation stimulation protein homolog from Clostridium acetobutylicum (strain ATCC 824 / DSM 792 / JCM 1419 / IAM 19013 / LMG 5710 / NBRC 13948 / NRRL B-527 / VKM B-1787 / 2291 / W).